Consider the following 310-residue polypeptide: MKLTIATRGSKLALWQSNHIKAQLESFGYEVELKIFKTKGDKILDTPLALIGGKGLFTKELEDAMLRGEADLAVHSLKDVPTELPEGLVLGAITKREMTNDSLLSEQYETLADLPPNAVVGTTSLRRRMQLLHLRPDICIKDLRGNVDTRINKLKNGEFDAIILAYAGLKRLGILESVRYVHPIDENTMIPAMGQAALGIECRPDVVDVVKKLNDEKSAIETFIERDFIDRLQGGCQVPIGVRASLLENNDIIVKAVIGLPDGSELLKDKIFGSKENYHELGKELAESMIDNGAKELLQRAEAMAFKEHK.

At Cys-236 the chain carries S-(dipyrrolylmethanemethyl)cysteine.

The protein belongs to the HMBS family. In terms of assembly, monomer. Dipyrromethane is required as a cofactor.

The catalysed reaction is 4 porphobilinogen + H2O = hydroxymethylbilane + 4 NH4(+). The protein operates within porphyrin-containing compound metabolism; protoporphyrin-IX biosynthesis; coproporphyrinogen-III from 5-aminolevulinate: step 2/4. Its function is as follows. Tetrapolymerization of the monopyrrole PBG into the hydroxymethylbilane pre-uroporphyrinogen in several discrete steps. The chain is Porphobilinogen deaminase from Nitratiruptor sp. (strain SB155-2).